The following is a 530-amino-acid chain: MMIILFNCFFCASFREDGQHPTVSLGGVWGAAKELHEDKEFHQSDVHVFIIMGASGDLAKKKIYPTLWWLFRDGLLPEQTYFVGFARSALTVDAIRTSCMPYLKVTETESDRLSAFFSRNSYISGNYTAGGSFSELNAHIMSLPGASDANRLFYLALPPTIYHSVTENIKHFCMSAKGWNRVIVEKPFGHDLQSSEELSTHLSSLFTEDQIYRIDHYLGKEMVQNLMVLRFGNRIFGPIWNRDNVACVVLTFKEPFGTQGRGGYFDDFGIIRDVMQNHMLQMLCLVAMEKPASTNSDDVRDEKVKVLKCIVPASMSDVVLGQYVGDPEGEGDAKLGYLDDPTVPKGSTQATFATVVLYVHNERWDGVPFILRCGKALNERKAEVRLQFTDVPGDIFRNQCYRNELVVRVQPNEAIYAKMMSKKPGVYFTPEETELDLTYKSRYKDVKLPDAYERLILDVFCGSQMHFVASDELREAWRIFTPLLHQIEKEKPKPIPYKYGSRGPAEADELEKRVGFRYEGTYKWVNPHRL.

Residues 53–60 (GASGDLAK), Arg87, Tyr162, and Lys186 contribute to the NADP(+) site. D-glucose 6-phosphate is bound by residues Lys186, 216–220 (HYLGK), Glu254, and Asp273. Catalysis depends on His278, which acts as the Proton acceptor. Arg372 contributes to the NADP(+) binding site. D-glucose 6-phosphate-binding residues include Lys375 and Arg380. NADP(+)-binding residues include Lys381, Arg385, and Arg408. Gln410 is a binding site for D-glucose 6-phosphate. NADP(+) contacts are provided by residues 416 to 418 (YAK), 436 to 438 (DLT), Arg502, Tyr518, and Trp524.

It belongs to the glucose-6-phosphate dehydrogenase family.

The protein resides in the cytoplasm. The protein localises to the cytosol. It catalyses the reaction D-glucose 6-phosphate + NADP(+) = 6-phospho-D-glucono-1,5-lactone + NADPH + H(+). Its pathway is carbohydrate degradation; pentose phosphate pathway; D-ribulose 5-phosphate from D-glucose 6-phosphate (oxidative stage): step 1/3. Cytosolic glucose-6-phosphate dehydrogenase that catalyzes the first and rate-limiting step of the oxidative branch within the pentose phosphate pathway/shunt, an alternative route to glycolysis for the dissimilation of carbohydrates and a major source of reducing power and metabolic intermediates for fatty acid and nucleic acid biosynthetic processes. This is Glucose-6-phosphate 1-dehydrogenase (g6pd) from Takifugu rubripes (Japanese pufferfish).